The primary structure comprises 787 residues: Protein translocase subunit SecA (787 aa).

Residues Gln85, 103–107, and Asp492 contribute to the ATP site; that span reads GEGKT.

The protein belongs to the SecA family. Monomer and homodimer. Part of the essential Sec protein translocation apparatus which comprises SecA, SecYEG and auxiliary proteins SecDF. Other proteins may also be involved.

The protein resides in the cell membrane. It localises to the cytoplasm. It catalyses the reaction ATP + H2O + cellular proteinSide 1 = ADP + phosphate + cellular proteinSide 2.. In terms of biological role, part of the Sec protein translocase complex. Interacts with the SecYEG preprotein conducting channel. Has a central role in coupling the hydrolysis of ATP to the transfer of proteins into and across the cell membrane, serving as an ATP-driven molecular motor driving the stepwise translocation of polypeptide chains across the membrane. In Limosilactobacillus reuteri (strain DSM 20016) (Lactobacillus reuteri), this protein is Protein translocase subunit SecA.